A 122-amino-acid chain; its full sequence is Large ribosomal subunit protein uL14 (122 aa).

Belongs to the universal ribosomal protein uL14 family. Part of the 50S ribosomal subunit. Forms a cluster with proteins L3 and L19. In the 70S ribosome, L14 and L19 interact and together make contacts with the 16S rRNA in bridges B5 and B8.

Its function is as follows. Binds to 23S rRNA. Forms part of two intersubunit bridges in the 70S ribosome. This chain is Large ribosomal subunit protein uL14, found in Jannaschia sp. (strain CCS1).